A 562-amino-acid polypeptide reads, in one-letter code: Arf-GAP domain and FG repeat-containing protein 1 (562 aa).

The Arf-GAP domain maps to 11–135 (EKHLKMLRDM…WYVPPEQAKV (125 aa)). The C4-type zinc-finger motif lies at 29–52 (CFDCDQRGPTYVNMTVGSFVCTSC). The disordered stretch occupies residues 145-193 (GSSASSTSSTPEVKPLKSLLGDSAPTLHLNKGTPSQSPVVGRSQGQQQE). Position 167 is a phosphoserine (Ser-167). A compositionally biased stretch (polar residues) spans 176 to 191 (GTPSQSPVVGRSQGQQ). Thr-177 is subject to Phosphothreonine. Residues Ser-181 and Ser-362 each carry the phosphoserine modification. Residue Ser-367 is glycosylated (O-linked (GlcNAc) serine).

As to quaternary structure, interacts with EPS15R and EPS15. Interacts with FCHO1. In terms of processing, O-glycosylated. In terms of tissue distribution, ubiquitously expressed.

It localises to the nucleus. It is found in the cytoplasmic vesicle. Functionally, required for vesicle docking or fusion during acrosome biogenesis. May play a role in RNA trafficking or localization. In case of infection by HIV-1, acts as a cofactor for viral Rev and promotes movement of Rev-responsive element-containing RNAs from the nuclear periphery to the cytoplasm. This step is essential for HIV-1 replication. The protein is Arf-GAP domain and FG repeat-containing protein 1 (AGFG1) of Homo sapiens (Human).